The chain runs to 305 residues: Oxygen-dependent coproporphyrinogen-III oxidase (305 aa).

S93 contributes to the substrate binding site. A divalent metal cation is bound by residues H97 and H107. The active-site Proton donor is the H107. 109–111 (NVR) provides a ligand contact to substrate. 2 residues coordinate a divalent metal cation: H146 and H176. The interval 241–276 (YVEFNLVFDRGTLFGLQSGGRTESILMSLPPQVRWG) is important for dimerization. 259 to 261 (GGR) provides a ligand contact to substrate.

Belongs to the aerobic coproporphyrinogen-III oxidase family. As to quaternary structure, homodimer. Requires a divalent metal cation as cofactor.

The protein localises to the cytoplasm. It carries out the reaction coproporphyrinogen III + O2 + 2 H(+) = protoporphyrinogen IX + 2 CO2 + 2 H2O. It participates in porphyrin-containing compound metabolism; protoporphyrin-IX biosynthesis; protoporphyrinogen-IX from coproporphyrinogen-III (O2 route): step 1/1. Its function is as follows. Involved in the heme biosynthesis. Catalyzes the aerobic oxidative decarboxylation of propionate groups of rings A and B of coproporphyrinogen-III to yield the vinyl groups in protoporphyrinogen-IX. In Pseudomonas paraeruginosa (strain DSM 24068 / PA7) (Pseudomonas aeruginosa (strain PA7)), this protein is Oxygen-dependent coproporphyrinogen-III oxidase.